Reading from the N-terminus, the 198-residue chain is KHSLPDLPYDYGALEPHINAQIMQLHHSKHHAAYVNNLNVTEEKYQEALAKGDVTAQIALQPALKFNGGGHINHSIFWTNLSPNGGGEPKGELLEAIKRDFGSFDKFKEKLTATSVGVQGSGWGWLGFNKERGHLQIAACPNQDPLQGTTGLIPLLGIDVWEHAYYLQYKNVRPDYLKAIWNVINWENVTERYMACKK.

Residue His-26 coordinates Mn(2+). The residue at position 34 (Tyr-34) is a 3'-nitrotyrosine. 2 positions are modified to N6-acetyllysine; alternate: Lys-44 and Lys-51. 2 positions are modified to N6-succinyllysine; alternate: Lys-44 and Lys-51. A Mn(2+)-binding site is contributed by His-74. An N6-acetyllysine modification is found at Lys-90. 2 positions are modified to N6-acetyllysine; alternate: Lys-98 and Lys-106. N6-succinyllysine; alternate occurs at positions 98 and 106. Mn(2+) contacts are provided by Asp-159 and His-163. Lys-178 is subject to N6-acetyllysine.

This sequence belongs to the iron/manganese superoxide dismutase family. As to quaternary structure, homotetramer. Mn(2+) serves as cofactor. Post-translationally, nitrated under oxidative stress. Nitration coupled with oxidation inhibits the catalytic activity. In terms of processing, acetylation at Lys-98 decreases enzymatic activity. Deacetylated by SIRT3 upon exposure to ionizing radiations or after long fasting. Polyubiquitinated; leading to proteasomal degradation. Deubiquitinated by USP36 which increases protein stability.

The protein resides in the mitochondrion matrix. The catalysed reaction is 2 superoxide + 2 H(+) = H2O2 + O2. Its function is as follows. Destroys superoxide anion radicals which are normally produced within the cells and which are toxic to biological systems. The polypeptide is Superoxide dismutase [Mn], mitochondrial (SOD2) (Hylobates lar (Lar gibbon)).